The chain runs to 295 residues: Very long chain fatty acid elongase 5 (295 aa).

A run of 7 helical transmembrane segments spans residues 26 to 46 (WLLL…LFIV), 64 to 84 (ILVV…YELV), 112 to 132 (VLWW…FFIL), 150 to 170 (MLNI…YFGA), 175 to 192 (FIHV…IPAM), 207 to 223 (LTQF…AMIW), and 227 to 247 (FPMG…ILFG). Residues 265-295 (YQNGSASAVNGHTNSFSSLEDNVKQRKQRQD) are disordered. A compositionally biased stretch (polar residues) spans 266–284 (QNGSASAVNGHTNSFSSLE). The span at 285 to 295 (DNVKQRKQRQD) shows a compositional bias: basic and acidic residues.

It belongs to the ELO family. ELOVL5 subfamily.

It localises to the endoplasmic reticulum membrane. The protein resides in the cell projection. The protein localises to the dendrite. The catalysed reaction is a very-long-chain acyl-CoA + malonyl-CoA + H(+) = a very-long-chain 3-oxoacyl-CoA + CO2 + CoA. It carries out the reaction (6Z,9Z,12Z)-octadecatrienoyl-CoA + malonyl-CoA + H(+) = (8Z,11Z,14Z)-3-oxoeicosatrienoyl-CoA + CO2 + CoA. The enzyme catalyses (9Z,12Z,15Z)-octadecatrienoyl-CoA + malonyl-CoA + H(+) = (11Z,14Z,17Z)-3-oxoeicosatrienoyl-CoA + CO2 + CoA. It catalyses the reaction (9Z)-hexadecenoyl-CoA + malonyl-CoA + H(+) = 3-oxo-(11Z)-octadecenoyl-CoA + CO2 + CoA. The catalysed reaction is (9Z)-octadecenoyl-CoA + malonyl-CoA + H(+) = 3-oxo-(11Z)-eicosenoyl-CoA + CO2 + CoA. It carries out the reaction (11Z)-octadecenoyl-CoA + malonyl-CoA + H(+) = 3-oxo-(13Z)-eicosenoyl-CoA + CO2 + CoA. The enzyme catalyses (9Z,12Z)-octadecadienoyl-CoA + malonyl-CoA + H(+) = (11Z,14Z)-3-oxoicosa-11,14-dienoyl-CoA + CO2 + CoA. It catalyses the reaction (6Z,9Z,12Z,15Z)-octadecatetraenoyl-CoA + malonyl-CoA + H(+) = (8Z,11Z,14Z,17Z)-3-oxoicosatetraenoyl-CoA + CO2 + CoA. The catalysed reaction is (5Z,8Z,11Z,14Z)-eicosatetraenoyl-CoA + malonyl-CoA + H(+) = (7Z,10Z,13Z,16Z)-3-oxodocosatetraenoyl-CoA + CO2 + CoA. It carries out the reaction (5Z,8Z,11Z,14Z,17Z)-eicosapentaenoyl-CoA + malonyl-CoA + H(+) = 3-oxo-(7Z,10Z,13Z,16Z,19Z)-docosapentaenoyl-CoA + CO2 + CoA. It functions in the pathway lipid metabolism; polyunsaturated fatty acid biosynthesis. Catalyzes the first and rate-limiting reaction of the four reactions that constitute the long-chain fatty acids elongation cycle. This endoplasmic reticulum-bound enzymatic process allows the addition of 2 carbons to the chain of long- and very long-chain fatty acids (VLCFAs) per cycle. Condensing enzyme that acts specifically toward polyunsaturated acyl-CoA with the higher activity toward C18:3(n-6) acyl-CoA. May participate in the production of monounsaturated and of polyunsaturated VLCFAs of different chain lengths that are involved in multiple biological processes as precursors of membrane lipids and lipid mediators. In conditions where the essential linoleic and alpha linoleic fatty acids are lacking it is also involved in the synthesis of Mead acid from oleic acid. This chain is Very long chain fatty acid elongase 5, found in Xenopus tropicalis (Western clawed frog).